Reading from the N-terminus, the 364-residue chain is Peptide chain release factor 1 (364 aa).

At Q232 the chain carries N5-methylglutamine.

This sequence belongs to the prokaryotic/mitochondrial release factor family. Post-translationally, methylated by PrmC. Methylation increases the termination efficiency of RF1.

The protein resides in the cytoplasm. Its function is as follows. Peptide chain release factor 1 directs the termination of translation in response to the peptide chain termination codons UAG and UAA. The polypeptide is Peptide chain release factor 1 (Sorangium cellulosum (strain So ce56) (Polyangium cellulosum (strain So ce56))).